The chain runs to 434 residues: Trigger factor (434 aa).

The PPIase FKBP-type domain occupies 160–245 (GDKVKMNFVG…LTEVQAANLP (86 aa)).

This sequence belongs to the FKBP-type PPIase family. Tig subfamily.

The protein resides in the cytoplasm. It carries out the reaction [protein]-peptidylproline (omega=180) = [protein]-peptidylproline (omega=0). Functionally, involved in protein export. Acts as a chaperone by maintaining the newly synthesized protein in an open conformation. Functions as a peptidyl-prolyl cis-trans isomerase. The protein is Trigger factor of Shewanella baltica (strain OS223).